The chain runs to 133 residues: Putative nickel-responsive regulator (133 aa).

Ni(2+) contacts are provided by His-74, His-85, His-87, and Cys-93.

Belongs to the transcriptional regulatory CopG/NikR family. It depends on Ni(2+) as a cofactor.

In terms of biological role, transcriptional regulator. The polypeptide is Putative nickel-responsive regulator (Saccharolobus solfataricus (strain ATCC 35092 / DSM 1617 / JCM 11322 / P2) (Sulfolobus solfataricus)).